The primary structure comprises 381 residues: Queuine tRNA-ribosyltransferase (381 aa).

The active-site Proton acceptor is Asp90. Substrate-binding positions include 90-94 (DSGGF), Asp144, Gln193, and Gly221. The tract at residues 252 to 258 (GVGTPEN) is RNA binding. The active-site Nucleophile is the Asp271. Positions 276 to 280 (TRNAR) are RNA binding; important for wobble base 34 recognition. Cys309, Cys311, Cys314, and His340 together coordinate Zn(2+).

It belongs to the queuine tRNA-ribosyltransferase family. In terms of assembly, homodimer. Within each dimer, one monomer is responsible for RNA recognition and catalysis, while the other monomer binds to the replacement base PreQ1. Requires Zn(2+) as cofactor.

It carries out the reaction 7-aminomethyl-7-carbaguanine + guanosine(34) in tRNA = 7-aminomethyl-7-carbaguanosine(34) in tRNA + guanine. It functions in the pathway tRNA modification; tRNA-queuosine biosynthesis. Catalyzes the base-exchange of a guanine (G) residue with the queuine precursor 7-aminomethyl-7-deazaguanine (PreQ1) at position 34 (anticodon wobble position) in tRNAs with GU(N) anticodons (tRNA-Asp, -Asn, -His and -Tyr). Catalysis occurs through a double-displacement mechanism. The nucleophile active site attacks the C1' of nucleotide 34 to detach the guanine base from the RNA, forming a covalent enzyme-RNA intermediate. The proton acceptor active site deprotonates the incoming PreQ1, allowing a nucleophilic attack on the C1' of the ribose to form the product. After dissociation, two additional enzymatic reactions on the tRNA convert PreQ1 to queuine (Q), resulting in the hypermodified nucleoside queuosine (7-(((4,5-cis-dihydroxy-2-cyclopenten-1-yl)amino)methyl)-7-deazaguanosine). The protein is Queuine tRNA-ribosyltransferase of Helicobacter hepaticus (strain ATCC 51449 / 3B1).